We begin with the raw amino-acid sequence, 141 residues long: Putative pre-16S rRNA nuclease (141 aa).

It belongs to the YqgF nuclease family.

The protein localises to the cytoplasm. Could be a nuclease involved in processing of the 5'-end of pre-16S rRNA. The protein is Putative pre-16S rRNA nuclease of Coxiella burnetii (strain CbuG_Q212) (Coxiella burnetii (strain Q212)).